A 188-amino-acid chain; its full sequence is Protein GrpE (188 aa).

It belongs to the GrpE family. In terms of assembly, homodimer.

The protein resides in the cytoplasm. Participates actively in the response to hyperosmotic and heat shock by preventing the aggregation of stress-denatured proteins, in association with DnaK and GrpE. It is the nucleotide exchange factor for DnaK and may function as a thermosensor. Unfolded proteins bind initially to DnaJ; upon interaction with the DnaJ-bound protein, DnaK hydrolyzes its bound ATP, resulting in the formation of a stable complex. GrpE releases ADP from DnaK; ATP binding to DnaK triggers the release of the substrate protein, thus completing the reaction cycle. Several rounds of ATP-dependent interactions between DnaJ, DnaK and GrpE are required for fully efficient folding. The chain is Protein GrpE from Chromobacterium violaceum (strain ATCC 12472 / DSM 30191 / JCM 1249 / CCUG 213 / NBRC 12614 / NCIMB 9131 / NCTC 9757 / MK).